The sequence spans 727 residues: Beta-galactosidase 2 (727 aa).

Positions methionine 1–alanine 27 are cleaved as a signal peptide. The active-site Proton donor is glutamate 185. Glutamate 254 serves as the catalytic Nucleophile. Residue asparagine 255 is glycosylated (N-linked (GlcNAc...) asparagine).

Belongs to the glycosyl hydrolase 35 family. In terms of tissue distribution, ubiquitous, with higher expression levels in roots and siliques.

Its subcellular location is the secreted. The protein localises to the extracellular space. The protein resides in the apoplast. The catalysed reaction is Hydrolysis of terminal non-reducing beta-D-galactose residues in beta-D-galactosides.. This chain is Beta-galactosidase 2 (BGAL2), found in Arabidopsis thaliana (Mouse-ear cress).